We begin with the raw amino-acid sequence, 804 residues long: Angiotensin-converting enzyme 2 (804 aa).

The signal sequence occupies residues 1-17 (MTGSFWLLLSLVAVTAA). Residues 18–739 (QSTTEEQAKT…LGPPYEPPVT (722 aa)) are Extracellular-facing. The Peptidase M2 domain occupies 19-606 (STTEEQAKTF…QNRNSFVGWS (588 aa)). N53 and N90 each carry an N-linked (GlcNAc...) asparagine glycan. Residue R168 participates in chloride binding. R272 is a binding site for substrate. N-linked (GlcNAc...) asparagine glycosylation occurs at N298. C343 and C360 are disulfide-bonded. 344-345 (HP) is a binding site for substrate. H373 is a binding site for Zn(2+). Catalysis depends on E374, which acts as the Proton acceptor. H377 and E401 together coordinate Zn(2+). Residue N431 is glycosylated (N-linked (GlcNAc...) asparagine). Residues W476 and K480 each coordinate chloride. The active-site Proton donor is the H504. Y514 contributes to the substrate binding site. A disulfide bridge connects residues C529 and C541. Residue N545 is glycosylated (N-linked (GlcNAc...) asparagine). Residues 613-804 (SDQSIKVRIS…QNIDDVQTSL (192 aa)) enclose the Collectrin-like domain. The interval 651 to 658 (RKYFSEAR) is essential for cleavage by ADAM17. 2 N-linked (GlcNAc...) asparagine glycosylation sites follow: N659 and N689. An essential for cleavage by TMPRSS11D and TMPRSS2 region spans residues 696–715 (RTEVENAIRLSRDRINDVFQ). The helical transmembrane segment at 740 to 760 (IWLIIFGVVMGVVVIGIVVLI) threads the bilayer. Residues 761 to 804 (FTGIRNRRKKNQASSEENPYGSVDLNKGENNSGFQNIDDVQTSL) are Cytoplasmic-facing. Positions 771–804 (NQASSEENPYGSVDLNKGENNSGFQNIDDVQTSL) are disordered. The short motif at 777-785 (ENPYGSVDL) is the LIR element. Y780 carries the phosphotyrosine modification. The Endocytic sorting signal signature appears at 780–783 (YGSV). An SH2-binding motif is present at residues 780–784 (YGSVD). At S782 the chain carries Phosphoserine. K787 is covalently cross-linked (Glycyl lysine isopeptide (Lys-Gly) (interchain with G-Cter in ubiquitin)). The span at 788–804 (GENNSGFQNIDDVQTSL) shows a compositional bias: polar residues. The short motif at 791–794 (NSGF) is the PTB element. Residues 802–804 (TSL) carry the PDZ-binding motif.

Belongs to the peptidase M2 family. As to quaternary structure, homodimer. Interacts with the catalytically active form of TMPRSS2. Interacts with SLC6A19; this interaction is essential for expression and function of SLC6A19 in intestine. Interacts with ITGA5:ITGB1. Probably interacts (via endocytic sorting signal motif) with AP2M1; the interaction is inhibited by phosphorylation of Tyr-780. Interacts (via PDZ-binding motif) with NHERF1 (via PDZ domains); the interaction may enhance ACE2 membrane residence. Zn(2+) serves as cofactor. The cofactor is chloride. Proteolytic cleavage by ADAM17 generates a secreted form. Also cleaved by serine proteases: TMPRSS2, TMPRSS11D and HPN/TMPRSS1. In terms of processing, phosphorylated. Phosphorylation at Tyr-780 probably inhibits interaction with AP2M1 and enables interactions with proteins containing SH2 domains. Post-translationally, ubiquitinated. Ubiquitinated on Lys-787 via 'Lys-48'-linked ubiquitin. 'Lys-48'-linked deubiquitinated by USP50 on the Lys-787; leading to its stabilization.

The protein resides in the secreted. It is found in the cell membrane. The protein localises to the cytoplasm. It localises to the cell projection. Its subcellular location is the cilium. The protein resides in the apical cell membrane. It carries out the reaction angiotensin II + H2O = angiotensin-(1-7) + L-phenylalanine. The enzyme catalyses angiotensin I + H2O = angiotensin-(1-9) + L-leucine. It catalyses the reaction bradykinin(1-8) + H2O = bradykinin(1-7) + L-phenylalanine. The catalysed reaction is neurotensin + H2O = neurotensin-(1-12) + L-leucine. It carries out the reaction kinetensin + H2O = kinetensin-(1-8) + L-leucine. The enzyme catalyses dynorphin A-(1-13) + H2O = dynorphin A-(1-12) + L-lysine. It catalyses the reaction apelin-13 + H2O = apelin-12 + L-phenylalanine. The catalysed reaction is [Pyr1]apelin-13 + H2O = [Pyr1]apelin-12 + L-phenylalanine. It carries out the reaction apelin-17 + H2O = apelin-16 + L-phenylalanine. In terms of biological role, essential counter-regulatory carboxypeptidase of the renin-angiotensin hormone system that is a critical regulator of blood volume, systemic vascular resistance, and thus cardiovascular homeostasis. Converts angiotensin I to angiotensin 1-9, a nine-amino acid peptide with anti-hypertrophic effects in cardiomyocytes, and angiotensin II to angiotensin 1-7, which then acts as a beneficial vasodilator and anti-proliferation agent, counterbalancing the actions of the vasoconstrictor angiotensin II. Also removes the C-terminal residue from three other vasoactive peptides, neurotensin, kinetensin, and des-Arg bradykinin, but is not active on bradykinin. Also cleaves other biological peptides, such as apelins, casomorphins and dynorphin A. Plays an important role in amino acid transport by acting as binding partner of amino acid transporter SLC6A19 in intestine, regulating trafficking, expression on the cell surface, and its catalytic activity. In Bos taurus (Bovine), this protein is Angiotensin-converting enzyme 2 (ACE2).